The sequence spans 456 residues: Adenylosuccinate lyase (456 aa).

N(6)-(1,2-dicarboxyethyl)-AMP contacts are provided by residues 15 to 16 (RY) and 90 to 92 (NHD). Lys94 carries the post-translational modification N6-acetyllysine. 122–123 (TS) is a N(6)-(1,2-dicarboxyethyl)-AMP binding site. Catalysis depends on His171, which acts as the Proton donor/acceptor. Gln247 contributes to the N(6)-(1,2-dicarboxyethyl)-AMP binding site. The active-site Proton donor/acceptor is Ser295. Residues Ser296, 301–303 (KVN), Asn309, Arg335, and 340–344 (STVLR) each bind N(6)-(1,2-dicarboxyethyl)-AMP. At Lys366 the chain carries N6-acetyllysine.

This sequence belongs to the lyase 1 family. Adenylosuccinate lyase subfamily. In terms of assembly, homotetramer. Residues from neighboring subunits contribute catalytic and substrate-binding residues to each active site.

It catalyses the reaction N(6)-(1,2-dicarboxyethyl)-AMP = fumarate + AMP. It carries out the reaction (2S)-2-[5-amino-1-(5-phospho-beta-D-ribosyl)imidazole-4-carboxamido]succinate = 5-amino-1-(5-phospho-beta-D-ribosyl)imidazole-4-carboxamide + fumarate. Its pathway is purine metabolism; AMP biosynthesis via de novo pathway; AMP from IMP: step 2/2. It functions in the pathway purine metabolism; IMP biosynthesis via de novo pathway; 5-amino-1-(5-phospho-D-ribosyl)imidazole-4-carboxamide from 5-amino-1-(5-phospho-D-ribosyl)imidazole-4-carboxylate: step 2/2. Functionally, catalyzes two reactions in de novo purine nucleotide biosynthesis. Catalyzes the breakdown of 5-aminoimidazole- (N-succinylocarboxamide) ribotide (SAICAR or 2-[5-amino-1-(5-phospho-beta-D-ribosyl)imidazole-4-carboxamido]succinate) to 5-aminoimidazole-4-carboxamide ribotide (AICAR or 5-amino-1-(5-phospho-beta-D-ribosyl)imidazole-4-carboxamide) and fumarate, and of adenylosuccinate (ADS or N(6)-(1,2-dicarboxyethyl)-AMP) to adenosine monophosphate (AMP) and fumarate. This Escherichia coli O6:H1 (strain CFT073 / ATCC 700928 / UPEC) protein is Adenylosuccinate lyase (purB).